Here is an 85-residue protein sequence, read N- to C-terminus: MDSKKIARINELAKKKKTEGLTPEEAVEQAKLREEYIAGYRRAVRHHIEGIKIVDEEGNDVTPEKLRQVQREKGLHGRSLDDPES.

Residues 62–85 (TPEKLRQVQREKGLHGRSLDDPES) form a disordered region.

It belongs to the UPF0291 family.

The protein resides in the cytoplasm. The chain is UPF0291 protein str0508 from Streptococcus thermophilus (strain CNRZ 1066).